The chain runs to 321 residues: Malate dehydrogenase (321 aa).

NAD(+) contacts are provided by residues 10–15 (GGGQIG) and aspartate 34. The substrate site is built by arginine 83 and arginine 89. NAD(+) is bound by residues asparagine 96 and 119 to 121 (ISN). Residues asparagine 121 and arginine 152 each coordinate substrate. Histidine 176 (proton acceptor) is an active-site residue.

The protein belongs to the LDH/MDH superfamily. MDH type 3 family.

The catalysed reaction is (S)-malate + NAD(+) = oxaloacetate + NADH + H(+). Catalyzes the reversible oxidation of malate to oxaloacetate. The sequence is that of Malate dehydrogenase from Trichlorobacter lovleyi (strain ATCC BAA-1151 / DSM 17278 / SZ) (Geobacter lovleyi).